A 422-amino-acid polypeptide reads, in one-letter code: Glutamate-1-semialdehyde 2,1-aminomutase (422 aa).

Lys-264 carries the post-translational modification N6-(pyridoxal phosphate)lysine.

It belongs to the class-III pyridoxal-phosphate-dependent aminotransferase family. HemL subfamily. In terms of assembly, homodimer. The cofactor is pyridoxal 5'-phosphate.

Its subcellular location is the cytoplasm. The catalysed reaction is (S)-4-amino-5-oxopentanoate = 5-aminolevulinate. Its pathway is porphyrin-containing compound metabolism; protoporphyrin-IX biosynthesis; 5-aminolevulinate from L-glutamyl-tRNA(Glu): step 2/2. This is Glutamate-1-semialdehyde 2,1-aminomutase from Clostridium tetani (strain Massachusetts / E88).